The primary structure comprises 364 residues: Chorismate synthase (364 aa).

Positions 41-60 (MQHDLDRRRPGTSRYTTARR) are disordered. Positions 48 and 54 each coordinate NADP(+). FMN is bound by residues 125–127 (RSS), 238–239 (NA), glycine 278, 293–297 (KPTSS), and arginine 319.

This sequence belongs to the chorismate synthase family. As to quaternary structure, homotetramer. Requires FMNH2 as cofactor.

The catalysed reaction is 5-O-(1-carboxyvinyl)-3-phosphoshikimate = chorismate + phosphate. Its pathway is metabolic intermediate biosynthesis; chorismate biosynthesis; chorismate from D-erythrose 4-phosphate and phosphoenolpyruvate: step 7/7. In terms of biological role, catalyzes the anti-1,4-elimination of the C-3 phosphate and the C-6 proR hydrogen from 5-enolpyruvylshikimate-3-phosphate (EPSP) to yield chorismate, which is the branch point compound that serves as the starting substrate for the three terminal pathways of aromatic amino acid biosynthesis. This reaction introduces a second double bond into the aromatic ring system. This is Chorismate synthase from Shewanella putrefaciens (strain CN-32 / ATCC BAA-453).